The primary structure comprises 100 residues: MSESPHDHAGDPVRLSAWVHGHVQGVGFRWWTRSRALESGLTGYARNAPDGRVHVIAEGPRERCERLLELLRSGTTPGRVSLVVESWEPARGDLTGFEER.

The Acylphosphatase-like domain maps to 14-100 (RLSAWVHGHV…RGDLTGFEER (87 aa)). Catalysis depends on residues Arg-29 and Asn-47.

The protein belongs to the acylphosphatase family.

The catalysed reaction is an acyl phosphate + H2O = a carboxylate + phosphate + H(+). The polypeptide is Acylphosphatase (acyP) (Nocardia farcinica (strain IFM 10152)).